Consider the following 160-residue polypeptide: Major pollen allergen Bet v 1-M/N (160 aa).

4 residues coordinate brassinolide: Lys55, Tyr82, Tyr84, and Asn101.

Belongs to the BetVI family.

The protein localises to the cytoplasm. Its function is as follows. May be a general steroid carrier protein. In Betula pendula (European white birch), this protein is Major pollen allergen Bet v 1-M/N (BETV1M).